The following is a 91-amino-acid chain: Putative transmembrane protein encoded by LINC00862 (91 aa).

Residues 49-69 form a helical membrane-spanning segment; that stretch reads IMALILMPSLHCFGNILILLF.

Its subcellular location is the membrane. This Homo sapiens (Human) protein is Putative transmembrane protein encoded by LINC00862 (LINC00862).